Here is a 637-residue protein sequence, read N- to C-terminus: Dihydrolipoyllysine-residue acetyltransferase component of pyruvate dehydrogenase complex, mitochondrial (637 aa).

A mitochondrion-targeting transit peptide spans 1 to 85; that stretch reads MWRVCVRRAQ…LLGSPGRRSY (85 aa). Residues 80 to 100 are disordered; sequence PGRRSYSLPPHQKVPLPSLSP. The Lipoyl-binding 1 domain occupies 90–166; sequence HQKVPLPSLS…PIGSIICITV (77 aa). At Ser-99 the chain carries Phosphoserine. Residue Lys-131 is modified to N6-lipoyllysine. Disordered stretches follow at residues 189-219 and 307-340; these read QAAA…PPHM and LKPQ…PAGP. Positions 201–211 are enriched in low complexity; the sequence is AAPTAPSAKAP. In terms of domain architecture, Lipoyl-binding 2 spans 218-287; it reads HMQVSAVGEQ…PLGAPLCIIV (70 aa). Residues 310 to 321 are compositionally biased toward pro residues; that stretch reads QAPPPVPPPVAA. Over residues 322 to 333 the composition is skewed to low complexity; that stretch reads APPTAQPLAPTP. Residues 345-382 enclose the Peripheral subunit-binding (PSBD) domain; it reads FVSPLAKKLAAERGIDLTQVKGTGPEGRIIKKDIDSFV. A CoA-binding site is contributed by Arg-451. Position 456 is an N6-acetyllysine (Lys-456). Lys-463 bears the N6-succinyllysine mark. CoA is bound at residue Ser-465. At Lys-537 the chain carries N6-succinyllysine. The CoA site is built by Ser-556, Asn-557, and Gly-581. Residues His-610 and Asp-614 contribute to the active site.

Belongs to the 2-oxoacid dehydrogenase family. As to quaternary structure, part of the pyruvate dehydrogenase complex (PDHc) that is a multi-enzyme complex composed of multiple copies of three enzymes, pyruvate dehydrogenase (subunits PDH1A and PDHB, E1 component), dihydrolipoamide acetyltransferase (DLAT, E2 component), and dihydrolipoamide dehydrogenase (DLD, E3 component) to which is added an additional protein the E3-binding protein (PDHX, E3BP). In terms of structural architecture, the E2 and E3BP components assemble into a 60meric central core with icosahedral symmetry. The central core is decorated with E1 and E3 proteins. Currently, two alternative models for the E2:E3BP stoichiometry are considered as being either 48:12 (E2(48)-E3BP(12)) or 40:20 (E2(40)-E3BP(20)). Interacts with PDK2 and PDK3. Interacts with SIRT4. Interacts with PDHB. Requires (R)-lipoate as cofactor. Post-translationally, delipoylated at Lys-131 by SIRT4, delipoylation decreases the PHD complex activity. Detected at higher levels in cauda epididymal spermatazoa than in caput epididymal spermatazoa (at protein level).

It is found in the mitochondrion matrix. The catalysed reaction is N(6)-[(R)-dihydrolipoyl]-L-lysyl-[protein] + acetyl-CoA = N(6)-[(R)-S(8)-acetyldihydrolipoyl]-L-lysyl-[protein] + CoA. As part of the pyruvate dehydrogenase complex, catalyzes the transfers of an acetyl group to a lipoic acid moiety. The pyruvate dehydrogenase complex, catalyzes the overall conversion of pyruvate to acetyl-CoA and CO(2), and thereby links cytoplasmic glycolysis and the mitochondrial tricarboxylic acid (TCA) cycle. This chain is Dihydrolipoyllysine-residue acetyltransferase component of pyruvate dehydrogenase complex, mitochondrial, found in Mesocricetus auratus (Golden hamster).